Here is a 64-residue protein sequence, read N- to C-terminus: Disintegrin VLO5A (64 aa).

Residues 1–64 enclose the Disintegrin domain; the sequence is NSGNPCCDPV…SDCPRNPYKD (64 aa). 4 cysteine pairs are disulfide-bonded: Cys6–Cys29, Cys20–Cys26, Cys25–Cys50, and Cys38–Cys57. The short motif at 42-44 is the Cell attachment site; atypical (VGD) element; the sequence is VGD.

The protein belongs to the venom metalloproteinase (M12B) family. P-II subfamily. P-IIe sub-subfamily. As to quaternary structure, heterodimer with VLO5B; disulfide-linked. Expressed by the venom gland.

It localises to the secreted. Functionally, poor inhibitor of platelet aggregation. The disintegrin inhibits the adhesion of the alpha-4/beta-1 (ITGA4/ITGB1) integrin to VCAM-1. Inhibition on alpha-IIb/beta-3 (ITGA2B/ITGB3) is low. In Macrovipera lebetina obtusa (Levant blunt-nosed viper), this protein is Disintegrin VLO5A.